A 218-amino-acid chain; its full sequence is PKHD-type hydroxylase IL0759 (218 aa).

Positions Gln-76–Ser-170 constitute a Fe2OG dioxygenase domain. 3 residues coordinate Fe cation: His-94, Asp-96, and His-151. Position 161 (Arg-161) interacts with 2-oxoglutarate.

Fe(2+) is required as a cofactor. The cofactor is L-ascorbate.

The chain is PKHD-type hydroxylase IL0759 from Idiomarina loihiensis (strain ATCC BAA-735 / DSM 15497 / L2-TR).